The sequence spans 505 residues: Ent-kaurene oxidase 2 (505 aa).

The chain crosses the membrane as a helical span at residues 3-23; sequence AFVPGGAGAAAAAVGGFVAAA. Cysteine 449 contributes to the heme binding site.

The protein belongs to the cytochrome P450 family. Heme is required as a cofactor. In terms of tissue distribution, widely expressed.

Its subcellular location is the membrane. It carries out the reaction ent-kaur-16-ene + 3 reduced [NADPH--hemoprotein reductase] + 3 O2 = ent-kaur-16-en-19-oate + 3 oxidized [NADPH--hemoprotein reductase] + 4 H2O + 4 H(+). Its pathway is plant hormone biosynthesis; gibberellin biosynthesis. Functionally, catalyzes three successive oxidations of the 4-methyl group of ent-kaurene giving kaurenoic acid, a key step in gibberellins (GAs) biosynthesis. GAs, which are involved many processes, including stem elongation, play a central role in plant development. In Oryza sativa subsp. japonica (Rice), this protein is Ent-kaurene oxidase 2.